A 189-amino-acid chain; its full sequence is UPF0232 protein MLBr00004 (189 aa).

A disordered region spans residues 59-78 (TDRRRNWSGPGPDVRDPQPL).

Belongs to the UPF0232 family.

The polypeptide is UPF0232 protein MLBr00004 (Mycobacterium leprae (strain Br4923)).